Consider the following 353-residue polypeptide: Putative ABC transporter ATP-binding protein MG303 homolog (353 aa).

An ABC transporter domain is found at 72–312; that stretch reads LYFYNLSVFV…MQLLQRYEIT (241 aa). 107-114 serves as a coordination point for ATP; the sequence is GPSGSGKT.

Belongs to the ABC transporter superfamily.

In Mycoplasma pneumoniae (strain ATCC 29342 / M129 / Subtype 1) (Mycoplasmoides pneumoniae), this protein is Putative ABC transporter ATP-binding protein MG303 homolog.